A 152-amino-acid chain; its full sequence is Snaclec coagulation factor IX/factor X-binding protein subunit A (152 aa).

The first 23 residues, 1–23 (MGRFIFMSFGLLVVAASLRGTGA), serve as a signal peptide directing secretion. Positions 24–152 (DCLSGWSSYE…GQQNPFVCEA (129 aa)) constitute a C-type lectin domain. 3 disulfides stabilise this stretch: Cys-25-Cys-36, Cys-53-Cys-150, and Cys-125-Cys-142. Positions 64, 66, and 70 each coordinate Ca(2+). A Ca(2+)-binding site is contributed by Glu-151.

This sequence belongs to the snaclec family. In terms of assembly, heterodimer of subunits A and B; disulfide-linked. As to expression, expressed by the venom gland.

The protein resides in the secreted. In terms of biological role, anticoagulant protein which binds to the gamma-carboxyglutamic acid-domain regions of factors IX (F9) and factor X (F10) in the presence of calcium with a 1 to 1 stoichiometry. The protein is Snaclec coagulation factor IX/factor X-binding protein subunit A of Protobothrops flavoviridis (Habu).